Here is a 1296-residue protein sequence, read N- to C-terminus: Phosphoribosylformylglycinamidine synthase (1296 aa).

The segment at Trp-304–Arg-323 is disordered. Residues Gly-306 to Asp-317 and Ala-677 each bind ATP. Positions 678, 717, 721, and 885 each coordinate Mg(2+). Ser-887 is an ATP binding site. The span at Pro-1000–Glu-1013 shows a compositional bias: basic and acidic residues. The disordered stretch occupies residues Pro-1000 to Asn-1019. A Glutamine amidotransferase type-1 domain is found at Val-1043–Gly-1296. Cys-1136 acts as the Nucleophile in catalysis. Active-site residues include His-1261 and Glu-1263.

This sequence in the N-terminal section; belongs to the FGAMS family. As to quaternary structure, monomer.

The protein resides in the cytoplasm. It catalyses the reaction N(2)-formyl-N(1)-(5-phospho-beta-D-ribosyl)glycinamide + L-glutamine + ATP + H2O = 2-formamido-N(1)-(5-O-phospho-beta-D-ribosyl)acetamidine + L-glutamate + ADP + phosphate + H(+). It participates in purine metabolism; IMP biosynthesis via de novo pathway; 5-amino-1-(5-phospho-D-ribosyl)imidazole from N(2)-formyl-N(1)-(5-phospho-D-ribosyl)glycinamide: step 1/2. Its function is as follows. Phosphoribosylformylglycinamidine synthase involved in the purines biosynthetic pathway. Catalyzes the ATP-dependent conversion of formylglycinamide ribonucleotide (FGAR) and glutamine to yield formylglycinamidine ribonucleotide (FGAM) and glutamate. This is Phosphoribosylformylglycinamidine synthase from Yersinia pseudotuberculosis serotype I (strain IP32953).